Here is a 182-residue protein sequence, read N- to C-terminus: Ribosome maturation factor RimP (182 aa).

This sequence belongs to the RimP family.

It is found in the cytoplasm. Required for maturation of 30S ribosomal subunits. The protein is Ribosome maturation factor RimP of Corynebacterium efficiens (strain DSM 44549 / YS-314 / AJ 12310 / JCM 11189 / NBRC 100395).